The sequence spans 508 residues: GMP synthase [glutamine-hydrolyzing] (508 aa).

One can recognise a Glutamine amidotransferase type-1 domain in the interval 1–189; that stretch reads MILVLDFGSQ…ALLVCGCEKT (189 aa). Catalysis depends on Cys78, which acts as the Nucleophile. Residues His163 and Glu165 contribute to the active site. The 194-residue stretch at 190–383 folds into the GMPS ATP-PPase domain; sequence WGMQHFAQRE…LGVSQDFLMR (194 aa). 217–223 serves as a coordination point for ATP; that stretch reads SGGVDST.

In terms of assembly, homodimer.

The enzyme catalyses XMP + L-glutamine + ATP + H2O = GMP + L-glutamate + AMP + diphosphate + 2 H(+). Its pathway is purine metabolism; GMP biosynthesis; GMP from XMP (L-Gln route): step 1/1. Its function is as follows. Catalyzes the synthesis of GMP from XMP. This chain is GMP synthase [glutamine-hydrolyzing] (guaA), found in Helicobacter pylori (strain ATCC 700392 / 26695) (Campylobacter pylori).